We begin with the raw amino-acid sequence, 135 residues long: Ribosome-binding factor A (135 aa).

The protein belongs to the RbfA family. As to quaternary structure, monomer. Binds 30S ribosomal subunits, but not 50S ribosomal subunits or 70S ribosomes.

The protein localises to the cytoplasm. In terms of biological role, one of several proteins that assist in the late maturation steps of the functional core of the 30S ribosomal subunit. Associates with free 30S ribosomal subunits (but not with 30S subunits that are part of 70S ribosomes or polysomes). Required for efficient processing of 16S rRNA. May interact with the 5'-terminal helix region of 16S rRNA. The protein is Ribosome-binding factor A of Caldicellulosiruptor saccharolyticus (strain ATCC 43494 / DSM 8903 / Tp8T 6331).